We begin with the raw amino-acid sequence, 547 residues long: Chaperonin GroEL (547 aa).

ATP is bound by residues 30–33 (TLGP), Lys51, 87–91 (DGTTT), Gly415, and Asp496. Residues 527 to 547 (KKDSPAMPGGGGMGGMGGMDF) form a disordered region. Positions 534-547 (PGGGGMGGMGGMDF) are enriched in gly residues.

Belongs to the chaperonin (HSP60) family. In terms of assembly, forms a cylinder of 14 subunits composed of two heptameric rings stacked back-to-back. Interacts with the co-chaperonin GroES.

The protein resides in the cytoplasm. The catalysed reaction is ATP + H2O + a folded polypeptide = ADP + phosphate + an unfolded polypeptide.. Functionally, together with its co-chaperonin GroES, plays an essential role in assisting protein folding. The GroEL-GroES system forms a nano-cage that allows encapsulation of the non-native substrate proteins and provides a physical environment optimized to promote and accelerate protein folding. This chain is Chaperonin GroEL, found in Methylocella silvestris (strain DSM 15510 / CIP 108128 / LMG 27833 / NCIMB 13906 / BL2).